Here is a 90-residue protein sequence, read N- to C-terminus: Small ribosomal subunit protein uS15c (90 aa).

Belongs to the universal ribosomal protein uS15 family. Part of the 30S ribosomal subunit.

Its subcellular location is the plastid. The protein localises to the chloroplast. In Mesostigma viride (Green alga), this protein is Small ribosomal subunit protein uS15c (rps15).